A 132-amino-acid chain; its full sequence is MSTHDPISDLITRIRNAQMRAKSKVSTPGSKMRANVLEVLKSEGYIRGYATLEHASGRSEIEIELKYFDGEPVIREIERVSKPGRRVYASVKNLPRVNNGLGISVLSTPKGIMADHEARDANVGGEVLFTVF.

The protein belongs to the universal ribosomal protein uS8 family. Part of the 30S ribosomal subunit. Contacts proteins S5 and S12.

In terms of biological role, one of the primary rRNA binding proteins, it binds directly to 16S rRNA central domain where it helps coordinate assembly of the platform of the 30S subunit. The polypeptide is Small ribosomal subunit protein uS8 (Rhodopseudomonas palustris (strain BisA53)).